Here is a 237-residue protein sequence, read N- to C-terminus: Uridylate kinase (237 aa).

9–12 (KLSG) contacts ATP. Residue glycine 51 participates in UMP binding. The ATP site is built by glycine 52 and arginine 56. Residues aspartate 71 and 132–139 (CGNPFFTT) contribute to the UMP site. Residues threonine 159, tyrosine 165, and aspartate 168 each coordinate ATP.

The protein belongs to the UMP kinase family. In terms of assembly, homohexamer.

The protein resides in the cytoplasm. It carries out the reaction UMP + ATP = UDP + ADP. The protein operates within pyrimidine metabolism; CTP biosynthesis via de novo pathway; UDP from UMP (UMPK route): step 1/1. Inhibited by UTP. Catalyzes the reversible phosphorylation of UMP to UDP. This is Uridylate kinase from Prochlorococcus marinus (strain SARG / CCMP1375 / SS120).